The following is a 139-amino-acid chain: Plastocyanin (139 aa).

The first 34 residues, 1–34 (MKLIAQISRSLSLALFALVLMVGSFVAVMSPAAA), serve as a signal peptide directing secretion. Residues 35 to 139 (ETFTVKMGAD…GMVGKITVEG (105 aa)) enclose the Plastocyanin-like domain. Cu cation is bound by residues His73, Cys123, His126, and Met131.

This sequence belongs to the plastocyanin family. Cu(2+) is required as a cofactor.

The protein localises to the cellular thylakoid membrane. In terms of biological role, participates in electron transfer between P700 and the cytochrome b6-f complex in photosystem I. The protein is Plastocyanin (petE) of Leptolyngbya laminosa (Phormidium laminosum).